The following is a 178-amino-acid chain: Putative metal-dependent hydrolase GK0616 (178 aa).

Residues histidine 68, histidine 161, and histidine 165 each contribute to the Zn(2+) site.

This sequence belongs to the metal hydrolase YfiT family. In terms of assembly, homodimer. The cofactor is Zn(2+).

It is found in the cytoplasm. Its function is as follows. Possible metal-dependent hydrolase. The chain is Putative metal-dependent hydrolase GK0616 from Geobacillus kaustophilus (strain HTA426).